The sequence spans 875 residues: Ubiquitin-protein ligase E3A (875 aa).

Residues Cys44 to Cys83 form a C4-type; atypical zinc finger. Residues Lys175–Glu186 show a composition bias toward basic and acidic residues. The disordered stretch occupies residues Lys175–Lys226. The span at Arg213 to Gln225 shows a compositional bias: polar residues. Ser218 carries the post-translational modification Phosphoserine. The tract at residues Ile401 to Arg418 is E6-binding. The tract at residues Arg418–Gln517 is interaction with HCV core protein. The residue at position 659 (Tyr659) is a Phosphotyrosine; by ABL1. Positions Tyr776–Leu875 constitute an HECT domain. Residue Cys843 is the Glycyl thioester intermediate of the active site.

As to quaternary structure, the active form is probably a homotrimer. Binds UBQLN1 and UBQLN2. Interacts with the 26S proteasome. Interacts with BPY2. Interacts with HIF1AN, MAPK6 and NEURL4; interaction with MAPK6 may be mediated by NEURL4. Interacts with the proteasomal subunit PSMD4. Interacts with ESR1 and WBP2. Interacts with BMAL1. Interacts with ARC. (Microbial infection) Interacts with HCV core protein and targets it to degradation. In terms of assembly, (Microbial infection) Interacts with the E6 protein of the cancer-associated human papillomavirus types 16 and 18. The E6/E6-AP complex binds to and targets the p53/TP53 tumor-suppressor protein for ubiquitin-mediated proteolysis. In terms of processing, phosphorylation at Tyr-659 by ABL1 impairs E3 ligase activity and protects p53/TP53 from degradation in (HPV)-infected cells.

It is found in the cytoplasm. Its subcellular location is the nucleus. It carries out the reaction S-ubiquitinyl-[E2 ubiquitin-conjugating enzyme]-L-cysteine + [acceptor protein]-L-lysine = [E2 ubiquitin-conjugating enzyme]-L-cysteine + N(6)-ubiquitinyl-[acceptor protein]-L-lysine.. The protein operates within protein modification; protein ubiquitination. Its function is as follows. E3 ubiquitin-protein ligase which accepts ubiquitin from an E2 ubiquitin-conjugating enzyme in the form of a thioester and transfers it to its substrates. Several substrates have been identified including the BMAL1, ARC, LAMTOR1, RAD23A and RAD23B, MCM7 (which is involved in DNA replication), annexin A1, the PML tumor suppressor, and the cell cycle regulator CDKN1B. Additionally, may function as a cellular quality control ubiquitin ligase by helping the degradation of the cytoplasmic misfolded proteins. Finally, UBE3A also promotes its own degradation in vivo. Plays an important role in the regulation of the circadian clock: involved in the ubiquitination of the core clock component BMAL1, leading to its proteasomal degradation. Acts as transcriptional coactivator of progesterone receptor PGR upon progesterone hormone activation. Acts as a regulator of synaptic development by mediating ubiquitination and degradation of ARC. Required for synaptic remodeling in neurons by mediating ubiquitination and degradation of LAMTOR1, thereby limiting mTORC1 signaling and activity-dependent synaptic remodeling. Synergizes with WBP2 in enhancing PGR activity. Functionally, (Microbial infection) Catalyzes the high-risk human papilloma virus E6-mediated ubiquitination of p53/TP53, contributing to the neoplastic progression of cells infected by these viruses. The chain is Ubiquitin-protein ligase E3A from Homo sapiens (Human).